The primary structure comprises 1447 residues: MFRAGEASKRPLPGPSPPRVRSVEVARGRAGYGFTLSGQAPCVLSCVMRGSPADFVGLRAGDQILAVNEINVKKASHEDVVKLIGKCSGVLHMVIAEGVGRFESCSSDEEGGLYEGKGWLKPKLDSKALGINRAERVVEEMQSGGIFNMIFENPSLCASNSEPLKLKQRSLSESAATRFDVGHESINNPNPNMLSKEEISKVIHDDSVFSIGLESHDDFALDASILNVAMIVGYLGSIELPSTSSNLESDSLQAIRGCMRRLRAEQKIHSLVTMKIMHDCVQLSTDKAGVVAEYPAEKLAFSAVCPDDRRFFGLVTMQTNDDGSLAQEEEGALRTSCHVFMVDPDLFNHKIHQGIARRFGFECTADPDTNGCLEFPASSLPVLQFISVLYRDMGELIEGMRARAFLDGDADAHQNNSTSSNSDSGIGNFHQEEKSNRVLVVDLGGSSSRHGPGGSAWDGVGGRGAQPWGAPWTGPFCPDPEGSPPFEAAHQTDRFWDLNKHLGPASPVEVPPASLRSSVPPSKRGTVGAGCGFNQRWLPVHVLREWQCGHTSDQDSYTDSTDGWSSINCGTLPPPMSKIPADRYRVEGSFAQPPLNAPKREWSRKAFGMQSIFGPHRNVRKTKEDKKGSKFGRGTGLTQPSQRTSARRSFGRSKRFSITRSLDDLESATVSDGELTGADLKDCVSNNSLSSNASLPSVQSCRRLRERRVASWAVSFERLLQDPVGVRYFSDFLRKEFSEENILFWQACEYFNHVPAHDKKELSYRAREIFSKFLCSKATTPVNIDSQAQLADDVLRAPHPDMFKEQQLQIFNLMKFDSYTRFLKSPLYQECILAEVEGRALPDSQQVPSSPASKHSLGSDHSSVSTPKKLSGKSKSGRSLNEELGDEDSEKKRKGAFFSWSRTRSTGRSQKKREHGDHADDALHANGGLCRRESQGSVSSAGSLDLSEACRTLAPEKDKATKHCCIHLPDGTSCVVAVKAGFSIKDILSGLCERHGINGAAADLFLVGGDKPLVLHQDSSILESRDLRLEKRTLFRLDLVPINRSVGLKAKPTKPVTEVLRPVVARYGLDLSGLLVRLSGEKEPLDLGAPISSLDGQRVVLEEKDPSRGKASADKQKGVPVKQNTAVNSSSRNHSATGEERTLGKSNSIKIKGENGKNARDPRLSKREESIAKIGKKKYQKINLDEAEEFFELISKAQSNRADDQRGLLRKEDLVLPEFLRLPPGSTELTLPTPAAVAKGFSKRSATGNGRESASQPGEQWEPVQESSDSPSTSPGSASSPPGPPGTTPPGQKSPSGPFCTPQSPVSLAQEGTAQIWKRQSQEVEAGGIQTVEDEHVAELTLMGEGDISSPNSTLLPPPSTPQEVPGPSRPGSGTHGSRDLPVNRIIDVDLVTGSAPGRDGGIAGAQAGPGRSQASGGPPTSDLPGLGPVPGEPAKPKTSAHHATFV.

Residues 1–21 form a disordered region; sequence MFRAGEASKRPLPGPSPPRVR. One can recognise a PDZ domain in the interval 22 to 98; that stretch reads SVEVARGRAG…GVLHMVIAEG (77 aa). Serine 172 and serine 195 each carry phosphoserine. A Glycyl lysine isopeptide (Lys-Gly) (interchain with G-Cter in SUMO2) cross-link involves residue lysine 196. One can recognise a PID domain in the interval 228–340; that stretch reads VAMIVGYLGS…GALRTSCHVF (113 aa). 2 disordered regions span residues 410–429 and 443–482; these read ADAH…IGNF and LGGS…DPEG. Over residues 413 to 425 the composition is skewed to polar residues; sequence HQNNSTSSNSDSG. Residues 451 to 464 show a composition bias toward gly residues; that stretch reads GPGGSAWDGVGGRG. An omega-N-methylarginine mark is found at arginine 524 and arginine 633. A disordered region spans residues 618–652; sequence NVRKTKEDKKGSKFGRGTGLTQPSQRTSARRSFGR. Serine 661 and serine 671 each carry phosphoserine. An RGS domain is found at 715 to 832; it reads SFERLLQDPV…LKSPLYQECI (118 aa). Residues 843-853 show a composition bias toward polar residues; it reads DSQQVPSSPAS. A disordered region spans residues 843–941; it reads DSQQVPSSPA…RESQGSVSSA (99 aa). Phosphoserine occurs at positions 850 and 879. Over residues 914–923 the composition is skewed to basic and acidic residues; sequence EHGDHADDAL. The residue at position 943 (serine 943) is a Phosphoserine. RBD domains are found at residues 962–1032 and 1034–1104; these read KHCC…LEKR and LFRL…LEEK. A compositionally biased stretch (basic and acidic residues) spans 1103-1117; sequence EKDPSRGKASADKQK. Residues 1103–1169 form a disordered region; it reads EKDPSRGKAS…RDPRLSKREE (67 aa). Over residues 1122–1136 the composition is skewed to polar residues; that stretch reads KQNTAVNSSSRNHSA. Residues 1151 to 1169 are compositionally biased toward basic and acidic residues; the sequence is IKGENGKNARDPRLSKREE. Residues 1187 to 1209 enclose the GoLoco domain; sequence AEEFFELISKAQSNRADDQRGLL. Residues 1240 to 1447 form a disordered region; it reads GFSKRSATGN…KTSAHHATFV (208 aa). Over residues 1244 to 1258 the composition is skewed to polar residues; that stretch reads RSATGNGRESASQPG. 2 stretches are compositionally biased toward low complexity: residues 1267-1280 and 1289-1298; these read SSDS…SASS and PPGQKSPSGP. A compositionally biased stretch (polar residues) spans 1301-1313; sequence TPQSPVSLAQEGT.

Interacts with GNAI1. Interacts with GNAI2 and GNAI3; the interactions are GDP-dependent. In terms of tissue distribution, isoform 3 is brain specific.

The protein resides in the nucleus. Its subcellular location is the cytoplasm. It is found in the cell projection. It localises to the dendrite. The protein localises to the synapse. The protein resides in the nucleus matrix. Its function is as follows. Regulates G protein-coupled receptor signaling cascades. Inhibits signal transduction by increasing the GTPase activity of G protein alpha subunits, thereby driving them into their inactive GDP-bound form. In terms of biological role, behaves as a cell cycle-dependent transcriptional repressor, promoting inhibition of S-phase DNA synthesis. This Homo sapiens (Human) protein is Regulator of G-protein signaling 12 (RGS12).